A 356-amino-acid chain; its full sequence is Isopentenyl-diphosphate delta-isomerase (356 aa).

Substrate is bound at residue 8-9 (RK). FMN contacts are provided by residues 66–68 (AIT), Ser96, and Asn124. 96 to 98 (SQR) contacts substrate. Gln160 contacts substrate. Glu161 is a Mg(2+) binding site. Residues Lys201, Thr231, 280–282 (GIR), and 301–302 (AL) contribute to the FMN site.

Belongs to the IPP isomerase type 2 family. As to quaternary structure, homooctamer. Dimer of tetramers. Requires FMN as cofactor. The cofactor is NADPH. It depends on Mg(2+) as a cofactor.

It localises to the cytoplasm. It catalyses the reaction isopentenyl diphosphate = dimethylallyl diphosphate. Its function is as follows. Involved in the biosynthesis of isoprenoids. Catalyzes the 1,3-allylic rearrangement of the homoallylic substrate isopentenyl (IPP) to its allylic isomer, dimethylallyl diphosphate (DMAPP). The protein is Isopentenyl-diphosphate delta-isomerase of Methanococcus aeolicus (strain ATCC BAA-1280 / DSM 17508 / OCM 812 / Nankai-3).